The sequence spans 182 residues: Large ribosomal subunit protein uL5 (182 aa).

Belongs to the universal ribosomal protein uL5 family. Part of the 50S ribosomal subunit; part of the 5S rRNA/L5/L18/L25 subcomplex. Contacts the 5S rRNA and the P site tRNA. Forms a bridge to the 30S subunit in the 70S ribosome.

In terms of biological role, this is one of the proteins that bind and probably mediate the attachment of the 5S RNA into the large ribosomal subunit, where it forms part of the central protuberance. In the 70S ribosome it contacts protein S13 of the 30S subunit (bridge B1b), connecting the 2 subunits; this bridge is implicated in subunit movement. Contacts the P site tRNA; the 5S rRNA and some of its associated proteins might help stabilize positioning of ribosome-bound tRNAs. The chain is Large ribosomal subunit protein uL5 from Mycoplasma mobile (strain ATCC 43663 / 163K / NCTC 11711) (Mesomycoplasma mobile).